The primary structure comprises 513 residues: MNKRAIISVYDKNGIVEFAKKLKEFGYDIISTGGTMKYLTENGIEVINISDVTRFPEILDGRVKTLHPNIHAGILAMKDNREHLETLKALDILPIDMVVVNLYPFKETIFKEDVTLDNVIENIDIGGPTMIRAAAKNFKYTTVIVDPEDYDIVAMEIEKNGEVSYETRFYLATKVFEYTSYYDSMIFNYFKHVRKDQSFSKHFTVPLELLQYLRYGENPHQKACFYKISLPFIETSNIVNCTQLHGKELSYNNILDSDSAIELLKEFDEPTCVAIKHNNPCAVASAENINEAYKKVYESDPISIFGGIVAFNRKVDKNVAEQLKKIFLEIVIAPEFDEDALSILCSKKDLRVLKLASLEKTDTFYDIKSVNGGALVQEKDRMLLADQLQVVTERKPSEKELEDLIFAWKVVKHVKSNAIVVAKDKMTLGIGTGQTNRIWAVEHAISRSRFDLKGAVLASDAFFPFSDSVEAAGKAGISAIIQPGGSIRDKDSIEMANRFNIAMVFTGMRHFRH.

The region spanning 1-145 is the MGS-like domain; that stretch reads MNKRAIISVY…KNFKYTTVIV (145 aa).

The protein belongs to the PurH family.

The catalysed reaction is (6R)-10-formyltetrahydrofolate + 5-amino-1-(5-phospho-beta-D-ribosyl)imidazole-4-carboxamide = 5-formamido-1-(5-phospho-D-ribosyl)imidazole-4-carboxamide + (6S)-5,6,7,8-tetrahydrofolate. It carries out the reaction IMP + H2O = 5-formamido-1-(5-phospho-D-ribosyl)imidazole-4-carboxamide. It participates in purine metabolism; IMP biosynthesis via de novo pathway; 5-formamido-1-(5-phospho-D-ribosyl)imidazole-4-carboxamide from 5-amino-1-(5-phospho-D-ribosyl)imidazole-4-carboxamide (10-formyl THF route): step 1/1. The protein operates within purine metabolism; IMP biosynthesis via de novo pathway; IMP from 5-formamido-1-(5-phospho-D-ribosyl)imidazole-4-carboxamide: step 1/1. This chain is Bifunctional purine biosynthesis protein PurH, found in Caldicellulosiruptor bescii (strain ATCC BAA-1888 / DSM 6725 / KCTC 15123 / Z-1320) (Anaerocellum thermophilum).